The chain runs to 210 residues: Superoxide dismutase [Mn], mitochondrial (210 aa).

H29, H77, D163, and H167 together coordinate Mn(2+).

The protein belongs to the iron/manganese superoxide dismutase family. Homotetramer. Requires Mn(2+) as cofactor.

Its subcellular location is the mitochondrion matrix. The catalysed reaction is 2 superoxide + 2 H(+) = H2O2 + O2. Its function is as follows. Destroys superoxide anion radicals which are normally produced within the cells and which are toxic to biological systems. The polypeptide is Superoxide dismutase [Mn], mitochondrial (sodB) (Aspergillus fumigatus (strain ATCC MYA-4609 / CBS 101355 / FGSC A1100 / Af293) (Neosartorya fumigata)).